Reading from the N-terminus, the 344-residue chain is Angiopoietin-related protein 7 (344 aa).

Positions 1 to 26 (MLKKTLSAVAWLCIFLVAFVSHPVWP) are cleaved as a signal peptide. The stretch at 37–116 (ELTAATCCEE…IGIMQLQAAQ (80 aa)) forms a coiled coil. An N-linked (GlcNAc...) asparagine glycan is attached at Asn56. Positions 120-341 (QTSADAIYDC…RVEMKIRPED (222 aa)) constitute a Fibrinogen C-terminal domain. Cys129 and Cys160 are oxidised to a cystine. Residues Asn251 and Asn265 are each glycosylated (N-linked (GlcNAc...) asparagine). Cys283 and Cys296 are joined by a disulfide.

As to quaternary structure, homotetramer; disulfide-linked.

Its subcellular location is the secreted. Has a role in the formation and organization of the extracellular matrix. In the eye, it functions as a mediator of dexamethasone-induced matrix deposition in the trabecular meshwork, the tissue responsible for the outflow of the ocular aqueous humor and for the maintenance of intraocular pressure. Is a negative regulator of angiogenesis in the cornea, and plays a major role in maintaining corneal avascularity and transparency. The protein is Angiopoietin-related protein 7 (ANGPTL7) of Bos taurus (Bovine).